The chain runs to 707 residues: Ornithine decarboxylase (707 aa).

The disordered stretch occupies residues 83 to 102; it reads NRNPLSRADSAAGREETAQT. Residue K288 is modified to N6-(pyridoxal phosphate)lysine. Pyridoxal 5'-phosphate-binding positions include S421, G458, and 498–501; that span reads EPGR. Position 561–562 (561–562) interacts with substrate; it reads FD. Residue C634 is the Proton donor; shared with dimeric partner of the active site. Position 635 (D635) interacts with substrate. Residue Y663 participates in pyridoxal 5'-phosphate binding.

It belongs to the Orn/Lys/Arg decarboxylase class-II family. As to quaternary structure, homodimer. Only the dimer is catalytically active, as the active sites are constructed of residues from both monomers. The cofactor is pyridoxal 5'-phosphate.

It carries out the reaction L-ornithine + H(+) = putrescine + CO2. Its pathway is amine and polyamine biosynthesis; putrescine biosynthesis via L-ornithine pathway; putrescine from L-ornithine: step 1/1. With respect to regulation, inhibited by antizyme (AZ) in response to polyamine levels. AZ inhibits the assembly of the functional homodimer by binding to ODC monomers and targeting them for ubiquitin-independent proteolytic destruction by the 26S proteasome. Inhibited by 1-amino-oxy-3-aminopropane (APA, an isosteric analog of putrescine). Irreversibly inhibited by alpha-difluoromethylornithine (DFMO, a curative agent of West African sleeping sickness). In terms of biological role, catalyzes the first and rate-limiting step of polyamine biosynthesis that converts ornithine into putrescine, which is the precursor for the polyamines, spermidine and spermine. Polyamines are essential for cell proliferation and are implicated in cellular processes, ranging from DNA replication to apoptosis. This chain is Ornithine decarboxylase, found in Leishmania donovani.